Consider the following 453-residue polypeptide: Ribosomal protein uS12 methylthiotransferase RimO (453 aa).

Residues 6–116 enclose the MTTase N-terminal domain; it reads PTVGIVSLGC…VLTAVHEAIA (111 aa). Residues cysteine 15, cysteine 51, cysteine 80, cysteine 148, cysteine 152, and cysteine 155 each contribute to the [4Fe-4S] cluster site. Positions 134–371 constitute a Radical SAM core domain; sequence LTPKHFAYLK…MQLQQQISAN (238 aa). Residues 374 to 440 form the TRAM domain; the sequence is QAKIGKTIQV…EYDLWATPVG (67 aa).

It belongs to the methylthiotransferase family. RimO subfamily. The cofactor is [4Fe-4S] cluster.

The protein localises to the cytoplasm. The catalysed reaction is L-aspartate(89)-[ribosomal protein uS12]-hydrogen + (sulfur carrier)-SH + AH2 + 2 S-adenosyl-L-methionine = 3-methylsulfanyl-L-aspartate(89)-[ribosomal protein uS12]-hydrogen + (sulfur carrier)-H + 5'-deoxyadenosine + L-methionine + A + S-adenosyl-L-homocysteine + 2 H(+). Functionally, catalyzes the methylthiolation of an aspartic acid residue of ribosomal protein uS12. The polypeptide is Ribosomal protein uS12 methylthiotransferase RimO (Hydrogenovibrio crunogenus (strain DSM 25203 / XCL-2) (Thiomicrospira crunogena)).